The sequence spans 74 residues: Sodium channel neurotoxin MeuNaTxalpha-11 (74 aa).

Positions 1-7 (LMTGVES) are cleaved as a signal peptide. The LCN-type CS-alpha/beta domain occupies 9–73 (RDAYIAKPHN…VPIRIPGKCH (65 aa)). 4 cysteine pairs are disulfide-bonded: cysteine 19–cysteine 72, cysteine 23–cysteine 45, cysteine 31–cysteine 55, and cysteine 35–cysteine 57. Residue arginine 74 is a propeptide, removed by a carboxypeptidase.

It belongs to the long (4 C-C) scorpion toxin superfamily. Sodium channel inhibitor family. Alpha subfamily. In terms of tissue distribution, expressed by the venom gland.

The protein localises to the secreted. Functionally, alpha toxins bind voltage-independently at site-3 of sodium channels (Nav) and inhibit the inactivation of the activated channels, thereby blocking neuronal transmission. The protein is Sodium channel neurotoxin MeuNaTxalpha-11 of Mesobuthus eupeus (Lesser Asian scorpion).